Reading from the N-terminus, the 427-residue chain is uncharacterized protein (427 aa).

Belongs to the CAF1 family.

This is an uncharacterized protein from Schizosaccharomyces pombe (strain 972 / ATCC 24843) (Fission yeast).